The primary structure comprises 215 residues: Cytochrome b6 (215 aa).

A helical membrane pass occupies residues 32-52; the sequence is IFYCLGGITLTCFIIQVATGF. Cys35 provides a ligand contact to heme c. 2 residues coordinate heme b: His86 and His100. 3 consecutive transmembrane segments (helical) span residues 90-110, 116-136, and 186-206; these read ASMM…TGGF, LTWV…VTGY, and LHTF…FLMI. Residues His187 and His202 each coordinate heme b.

It belongs to the cytochrome b family. PetB subfamily. The 4 large subunits of the cytochrome b6-f complex are cytochrome b6, subunit IV (17 kDa polypeptide, PetD), cytochrome f and the Rieske protein, while the 4 small subunits are PetG, PetL, PetM and PetN. The complex functions as a dimer. Heme b is required as a cofactor. The cofactor is heme c.

Its subcellular location is the plastid. It localises to the chloroplast thylakoid membrane. Its function is as follows. Component of the cytochrome b6-f complex, which mediates electron transfer between photosystem II (PSII) and photosystem I (PSI), cyclic electron flow around PSI, and state transitions. The polypeptide is Cytochrome b6 (Zygnema circumcarinatum (Green alga)).